The chain runs to 602 residues: Prostaglandin G/H synthase 1 (602 aa).

The N-terminal stretch at 1–26 (MSRRSLSLQFPLLLLLLLLPPPPVLL) is a signal peptide. One can recognise an EGF-like domain in the interval 34 to 72 (PVNPCCYYPCQNQGVCVRFGLDHYQCDCTRTGYSGPNCT). Disulfide bonds link C38–C49, C39–C161, C43–C59, and C61–C71. N-linked (GlcNAc...) asparagine glycosylation is found at N70, N106, and N146. The active-site Proton acceptor is H209. Y387 (for cyclooxygenase activity) is an active-site residue. A heme b-binding site is contributed by H390. N-linked (GlcNAc...) asparagine glycosylation occurs at N412. Residues C571 and C577 are joined by a disulfide bond.

Belongs to the prostaglandin G/H synthase family. As to quaternary structure, homodimer. The cofactor is heme b.

Its subcellular location is the microsome membrane. The protein localises to the endoplasmic reticulum membrane. It catalyses the reaction (5Z,8Z,11Z,14Z)-eicosatetraenoate + AH2 + 2 O2 = prostaglandin H2 + A + H2O. It carries out the reaction (5Z,8Z,11Z,14Z)-eicosatetraenoate + 2 O2 = prostaglandin G2. The catalysed reaction is prostaglandin G2 + AH2 = prostaglandin H2 + A + H2O. The enzyme catalyses (9Z,12Z)-octadecadienoate + AH2 + O2 = (9R)-hydroxy-(10E,12Z)-octadecadienoate + A + H2O. It catalyses the reaction (9Z,12Z)-octadecadienoate + AH2 + O2 = (9S)-hydroxy-(10E,12Z)-octadecadienoate + A + H2O. It carries out the reaction (9Z,12Z)-octadecadienoate + AH2 + O2 = (13S)-hydroxy-(9Z,11E)-octadecadienoate + A + H2O. The catalysed reaction is (9Z,12Z)-octadecadienoate + AH2 + O2 = (13R)-hydroxy-(9Z,11E)-octadecadienoate + A + H2O. It participates in lipid metabolism; prostaglandin biosynthesis. Its activity is regulated as follows. The cyclooxygenase activity is inhibited by nonsteroidal anti-inflammatory drugs (NSAIDs) including ibuprofen, flurbiprofen, ketoprofen, naproxen, flurbiprofen, anirolac, fenclofenac and diclofenac. Its function is as follows. Dual cyclooxygenase and peroxidase that plays an important role in the biosynthesis pathway of prostanoids, a class of C20 oxylipins mainly derived from arachidonate ((5Z,8Z,11Z,14Z)-eicosatetraenoate, AA, C20:4(n-6)), with a particular role in the inflammatory response. The cyclooxygenase activity oxygenates AA to the hydroperoxy endoperoxide prostaglandin G2 (PGG2), and the peroxidase activity reduces PGG2 to the hydroxy endoperoxide prostaglandin H2 (PGH2), the precursor of all 2-series prostaglandins and thromboxanes. This complex transformation is initiated by abstraction of hydrogen at carbon 13 (with S-stereochemistry), followed by insertion of molecular O2 to form the endoperoxide bridge between carbon 9 and 11 that defines prostaglandins. The insertion of a second molecule of O2 (bis-oxygenase activity) yields a hydroperoxy group in PGG2 that is then reduced to PGH2 by two electrons. Involved in the constitutive production of prostanoids in particular in the stomach and platelets. In gastric epithelial cells, it is a key step in the generation of prostaglandins, such as prostaglandin E2 (PGE2), which plays an important role in cytoprotection. In platelets, it is involved in the generation of thromboxane A2 (TXA2), which promotes platelet activation and aggregation, vasoconstriction and proliferation of vascular smooth muscle cells. Can also use linoleate (LA, (9Z,12Z)-octadecadienoate, C18:2(n-6)) as substrate and produce hydroxyoctadecadienoates (HODEs) in a regio- and stereospecific manner, being (9R)-HODE ((9R)-hydroxy-(10E,12Z)-octadecadienoate) and (13S)-HODE ((13S)-hydroxy-(9Z,11E)-octadecadienoate) its major products. The chain is Prostaglandin G/H synthase 1 from Rattus norvegicus (Rat).